The primary structure comprises 383 residues: Sulfate adenylyltransferase (383 aa).

The protein belongs to the sulfate adenylyltransferase family.

The enzyme catalyses sulfate + ATP + H(+) = adenosine 5'-phosphosulfate + diphosphate. Its pathway is sulfur metabolism; hydrogen sulfide biosynthesis; sulfite from sulfate: step 1/3. This is Sulfate adenylyltransferase (sat) from Aeropyrum pernix (strain ATCC 700893 / DSM 11879 / JCM 9820 / NBRC 100138 / K1).